Here is a 291-residue protein sequence, read N- to C-terminus: Formamidopyrimidine-DNA glycosylase (291 aa).

Catalysis depends on proline 2, which acts as the Schiff-base intermediate with DNA. Residue glutamate 3 is the Proton donor of the active site. Residue lysine 58 is the Proton donor; for beta-elimination activity of the active site. DNA-binding residues include histidine 100, arginine 123, and lysine 166. The FPG-type zinc-finger motif lies at 257 to 291 (SVYGREGKECFQCGIPITRISQSGRSSFYCSQCQK). Arginine 281 serves as the catalytic Proton donor; for delta-elimination activity.

Belongs to the FPG family. As to quaternary structure, monomer. It depends on Zn(2+) as a cofactor.

It carries out the reaction Hydrolysis of DNA containing ring-opened 7-methylguanine residues, releasing 2,6-diamino-4-hydroxy-5-(N-methyl)formamidopyrimidine.. The enzyme catalyses 2'-deoxyribonucleotide-(2'-deoxyribose 5'-phosphate)-2'-deoxyribonucleotide-DNA = a 3'-end 2'-deoxyribonucleotide-(2,3-dehydro-2,3-deoxyribose 5'-phosphate)-DNA + a 5'-end 5'-phospho-2'-deoxyribonucleoside-DNA + H(+). Functionally, involved in base excision repair of DNA damaged by oxidation or by mutagenic agents. Acts as a DNA glycosylase that recognizes and removes damaged bases. Has a preference for oxidized purines, such as 7,8-dihydro-8-oxoguanine (8-oxoG). Has AP (apurinic/apyrimidinic) lyase activity and introduces nicks in the DNA strand. Cleaves the DNA backbone by beta-delta elimination to generate a single-strand break at the site of the removed base with both 3'- and 5'-phosphates. The chain is Formamidopyrimidine-DNA glycosylase from Bartonella quintana (strain Toulouse) (Rochalimaea quintana).